The chain runs to 366 residues: Putative [LysW]-aminoadipate semialdehyde/glutamate semialdehyde transaminase (366 aa).

Pyridoxal 5'-phosphate-binding positions include 90-91 (GT) and Phe117. Arg120 is a binding site for substrate. 202–205 (DEVQ) serves as a coordination point for pyridoxal 5'-phosphate. Lys230 carries the post-translational modification N6-(pyridoxal phosphate)lysine. Residue Ser254 participates in substrate binding. Thr255 contributes to the pyridoxal 5'-phosphate binding site.

This sequence belongs to the class-III pyridoxal-phosphate-dependent aminotransferase family. LysJ subfamily. As to quaternary structure, homodimer. It depends on pyridoxal 5'-phosphate as a cofactor.

It is found in the cytoplasm. It carries out the reaction [amino-group carrier protein]-C-terminal-gamma-(L-lysyl)-L-glutamate + 2-oxoglutarate = [amino-group carrier protein]-C-terminal-N-(1-carboxy-5-oxopentan-1-yl)-L-glutamine + L-glutamate. The enzyme catalyses [amino-group carrier protein]-C-terminal-gamma-(L-ornithyl)-L-glutamate + 2-oxoglutarate = [amino-group carrier protein]-C-terminal-gamma-(L-glutamyl-5-semialdehyde)-L-glutamate + L-glutamate. It functions in the pathway amino-acid biosynthesis; L-lysine biosynthesis via AAA pathway; L-lysine from L-alpha-aminoadipate (Thermus route): step 4/5. It participates in amino-acid biosynthesis; L-arginine biosynthesis. Involved in both the arginine and lysine biosynthetic pathways. This is Putative [LysW]-aminoadipate semialdehyde/glutamate semialdehyde transaminase from Pyrococcus furiosus (strain ATCC 43587 / DSM 3638 / JCM 8422 / Vc1).